We begin with the raw amino-acid sequence, 901 residues long: Protein translocase subunit SecA (901 aa).

ATP-binding positions include Gln-87, 105–109 (GEGKT), and Asp-512. Positions 852 to 901 (AQMQQLSHQDDDSAAAAALAAQTGDRKVGRNDPCPCGSGKKYKQCHGRLS) are disordered. Residues Cys-885, Cys-887, Cys-896, and His-897 each contribute to the Zn(2+) site. Basic residues predominate over residues 891-901 (KKYKQCHGRLS).

It belongs to the SecA family. In terms of assembly, monomer and homodimer. Part of the essential Sec protein translocation apparatus which comprises SecA, SecYEG and auxiliary proteins SecDF-YajC and YidC. It depends on Zn(2+) as a cofactor.

The protein localises to the cell inner membrane. The protein resides in the cytoplasm. The enzyme catalyses ATP + H2O + cellular proteinSide 1 = ADP + phosphate + cellular proteinSide 2.. Functionally, part of the Sec protein translocase complex. Interacts with the SecYEG preprotein conducting channel. Has a central role in coupling the hydrolysis of ATP to the transfer of proteins into and across the cell membrane, serving both as a receptor for the preprotein-SecB complex and as an ATP-driven molecular motor driving the stepwise translocation of polypeptide chains across the membrane. The polypeptide is Protein translocase subunit SecA (Citrobacter koseri (strain ATCC BAA-895 / CDC 4225-83 / SGSC4696)).